A 492-amino-acid chain; its full sequence is Aspartyl/glutamyl-tRNA(Asn/Gln) amidotransferase subunit B (492 aa).

It belongs to the GatB/GatE family. GatB subfamily. As to quaternary structure, heterotrimer of A, B and C subunits.

The catalysed reaction is L-glutamyl-tRNA(Gln) + L-glutamine + ATP + H2O = L-glutaminyl-tRNA(Gln) + L-glutamate + ADP + phosphate + H(+). It carries out the reaction L-aspartyl-tRNA(Asn) + L-glutamine + ATP + H2O = L-asparaginyl-tRNA(Asn) + L-glutamate + ADP + phosphate + 2 H(+). In terms of biological role, allows the formation of correctly charged Asn-tRNA(Asn) or Gln-tRNA(Gln) through the transamidation of misacylated Asp-tRNA(Asn) or Glu-tRNA(Gln) in organisms which lack either or both of asparaginyl-tRNA or glutaminyl-tRNA synthetases. The reaction takes place in the presence of glutamine and ATP through an activated phospho-Asp-tRNA(Asn) or phospho-Glu-tRNA(Gln). This Bradyrhizobium sp. (strain BTAi1 / ATCC BAA-1182) protein is Aspartyl/glutamyl-tRNA(Asn/Gln) amidotransferase subunit B.